A 427-amino-acid polypeptide reads, in one-letter code: Glutamate-1-semialdehyde 2,1-aminomutase (427 aa).

Lys268 is modified (N6-(pyridoxal phosphate)lysine).

Belongs to the class-III pyridoxal-phosphate-dependent aminotransferase family. HemL subfamily. The cofactor is pyridoxal 5'-phosphate.

It is found in the cytoplasm. It carries out the reaction (S)-4-amino-5-oxopentanoate = 5-aminolevulinate. It functions in the pathway porphyrin-containing compound metabolism; protoporphyrin-IX biosynthesis; 5-aminolevulinate from L-glutamyl-tRNA(Glu): step 2/2. This Methanococcus maripaludis (strain C5 / ATCC BAA-1333) protein is Glutamate-1-semialdehyde 2,1-aminomutase.